The primary structure comprises 304 residues: Rhodopsin (304 aa).

Residues 1-13 (YEYPQYYLVNPAA) are Extracellular-facing. The helical transmembrane segment at 14 to 38 (YAALGAYMFLLILVGFPINFLTLYV) threads the bilayer. Residues 39-50 (TIEHKKLRTPLN) lie on the Cytoplasmic side of the membrane. Residues 51 to 73 (YILLNLAVANLFMVFGGFTTTMF) form a helical membrane-spanning segment. The Extracellular portion of the chain corresponds to 74–87 (TSIRGYFVLGHLGC). Cys87 and Cys164 are oxidised to a cystine. The chain crosses the membrane as a helical span at residues 88-110 (NLEGFFATLSGEIALWSLVVLAI). Residues 111-113 (ERW) carry the 'Ionic lock' involved in activated form stabilization motif. The Cytoplasmic portion of the chain corresponds to 111–129 (ERWVVVCKPISNFRFGENH). A helical membrane pass occupies residues 130-150 (AIMGLAFTWTMAMACAAPPLV). Topologically, residues 151 to 179 (GWSRYIPEGMQCSCGIDYYTRAEGFNNES) are extracellular. Asn177 carries N-linked (GlcNAc...) asparagine glycosylation. Residues 180-201 (FVVYMFTCHFMTPLTIVFFCYG) form a helical membrane-spanning segment. Residues 202–229 (RLLCAVKEAAAAQQESETTQRAEREVTR) are Cytoplasmic-facing. Residues 230 to 251 (MVVIMVIAFLICWCPYAGVAWF) form a helical membrane-spanning segment. At 252–263 (IFTHQGSEFGPV) the chain is on the extracellular side. A helical membrane pass occupies residues 264-285 (FMTIPAFFAKSSSIYNPMIYIC). Lys273 carries the N6-(retinylidene)lysine modification. The Cytoplasmic segment spans residues 286–304 (LNKQFRHCMITTLCCGKKA). 2 S-palmitoyl cysteine lipidation sites follow: Cys299 and Cys300.

This sequence belongs to the G-protein coupled receptor 1 family. Opsin subfamily. Phosphorylated on some or all of the serine and threonine residues present in the C-terminal region. In terms of processing, contains one covalently linked retinal chromophore.

The protein localises to the membrane. It is found in the cell projection. The protein resides in the cilium. It localises to the photoreceptor outer segment. In terms of biological role, photoreceptor required for image-forming vision at low light intensity. While most salt water fish species use retinal as chromophore, most freshwater fish use 3-dehydroretinal, or a mixture of retinal and 3-dehydroretinal. Light-induced isomerization of 11-cis to all-trans retinal triggers a conformational change that activates signaling via G-proteins. Subsequent receptor phosphorylation mediates displacement of the bound G-protein alpha subunit by arrestin and terminates signaling. The polypeptide is Rhodopsin (rho) (Ictalurus punctatus (Channel catfish)).